The chain runs to 337 residues: Glutaredoxin-3 (337 aa).

A2 is modified (N-acetylalanine). Positions 2–119 (AAGAAEAGEA…LTKKVQRHVS (118 aa)) constitute a Thioredoxin domain. S119 is modified (phosphoserine). 2 consecutive Glutaredoxin domains span residues 144 to 238 (HAAP…PKLE) and 239 to 337 (ERLK…KGEN). 2 residues coordinate [2Fe-2S] cluster: C161 and C263.

Homodimer; the homodimer is independent of 2Fe-2S clusters. Heterotrimer; forms a heterotrimeric complex composed by two BOLA2 molecules and one GLRX3 molecule; linked by [2Fe-2S] clusters. Interacts (via N-terminus) with PRKCQ/PKC-theta. Interacts (via C-terminus) with CSRP3. Interacts with CSRP2.

Its subcellular location is the cytoplasm. The protein resides in the cytosol. It localises to the cell cortex. The protein localises to the myofibril. It is found in the sarcomere. Its subcellular location is the z line. Its function is as follows. Together with BOLA2, acts as a cytosolic iron-sulfur (Fe-S) cluster assembly factor that facilitates [2Fe-2S] cluster insertion into a subset of cytosolic proteins. Acts as a critical negative regulator of cardiac hypertrophy and a positive inotropic regulator. Required for hemoglobin maturation. Does not possess any thyoredoxin activity since it lacks the conserved motif that is essential for catalytic activity. This chain is Glutaredoxin-3 (Glrx3), found in Mus musculus (Mouse).